The following is a 250-amino-acid chain: DNA repair protein RecO (250 aa).

Belongs to the RecO family.

Functionally, involved in DNA repair and RecF pathway recombination. The polypeptide is DNA repair protein RecO (Lactobacillus acidophilus (strain ATCC 700396 / NCK56 / N2 / NCFM)).